Consider the following 1029-residue polypeptide: MCNVAEDPSSFSTITIATTCRAEWPKVSPCIADGRNHTDCCLKKGVQHDCLEICSGSTKELGVHSVLCLNLDLQAIYQCIRQGYETHPSAPGNVTISELTAHSVTVQWTEPNSNAHLVENYTLFIRKNEHGEAVRTVKNVISPHVELGLDPDSEYVLTLQSHSANGTSLPSTAKLFSTLPTTRPPLCTIGEPIYMNDGRVMICDAVNPCPNGFRCTGAGSDLSYCCPHDGTHSSEEFTSCCKEQKMPESCMSSCQYNMTLPESCKENLNTWVQCASEGHDHLRCCLQEEVSKPCQTACMHPFTVPADECFSEVSKYRTCFSAAHQALPAAVRNVEVSSISKDSATISWEDLEANIIVFRVQLFEKGGNLIKTENSSADIFRFIDLEPNKDYSVRVTAINFLGEGPPSWNATFTTKPAQIYEGDRPVAPEKLRISWNSGPRVNVTWDPVSVRRNAEVVTKPIEYTIYYLDTEQSSTWTTLRTNQTWVVMRDLRKDALYYVYVTAKEDNRTSRSSSIITILAQKDSPGLPEPTIVIEPDHKDGVFSPGEKISINCSLPNIKKHLNIDLTVGSHVVQNDHGALWVILETEADEAMDTATCAVSDTDGRQHVAMKHLVLERKASVTMKKDKIRVLDDQSVEIECIYRGGGLDPKISFEKDGKKASRGFLNLKKTEAGYVAKWHIRKVKQEDAGFYKCVVTSSDGSRVEASSEVIFSTETLPVNPKLILQCCEDEGITGDCLQACNIGRTSLSIKNQNCTRFAVSLLKCASDIRDHSDCCIASGVTSKCLPLCSGDSFSPDIDCSEHAVSIMTCSVKSHEHAPSEVSNVRIKASEGKVNIEWDYPLTKDYKYFAVYYRKAHDDHEDWHKLKTIQQNIELDVDPSEDYEVGILAANALGHSRLMYSAIPKDSEPRRSASKGSSSAFWIVVILVVFGVLIAGLAVLSKRRELPYPIGKFIGRRNDPNQPTVAFENPAYGEPWGGAEVEIRGLGGSATTGTAAATQSEWQSANLEANSTTDNSHEYRNGMRYAKLET.

A signal peptide spans 1–22 (MCNVAEDPSSFSTITIATTCRA). At 23–918 (EWPKVSPCIA…RRSASKGSSS (896 aa)) the chain is on the extracellular side. Asparagine 36, asparagine 93, asparagine 120, and asparagine 165 each carry an N-linked (GlcNAc...) asparagine glycan. The Fibronectin type-III 1 domain occupies 90-181 (APGNVTISEL…TAKLFSTLPT (92 aa)). Positions 185–227 (PLCTIGEPIYMNDGRVMICDAVNPCPNGFRCTGAGSDLSYCCP) constitute a WR1 domain. N-linked (GlcNAc...) asparagine glycans are attached at residues asparagine 257, asparagine 374, asparagine 409, asparagine 442, asparagine 482, asparagine 507, and asparagine 552. Fibronectin type-III domains are found at residues 330–417 (AVRN…TKPA) and 427–523 (APEK…AQKD). The Ig-like C2-type domain occupies 619–710 (ASVTMKKDKI…SRVEASSEVI (92 aa)). A disulfide bond links cysteine 640 and cysteine 693. A glycan (N-linked (GlcNAc...) asparagine) is linked at asparagine 753. Positions 817-909 (APSEVSNVRI…SAIPKDSEPR (93 aa)) constitute a Fibronectin type-III 4 domain. The helical transmembrane segment at 919–939 (AFWIVVILVVFGVLIAGLAVL) threads the bilayer. Topologically, residues 940–1029 (SKRRELPYPI…NGMRYAKLET (90 aa)) are cytoplasmic. The disordered stretch occupies residues 988–1021 (SATTGTAAATQSEWQSANLEANSTTDNSHEYRNG). Residues 998 to 1013 (QSEWQSANLEANSTTD) are compositionally biased toward polar residues.

It localises to the cell membrane. This chain is Ig-like and fibronectin type-III domain-containing protein 1, found in Caenorhabditis elegans.